The sequence spans 34 residues: MEVNILAFIATALFILVPTAFLLIIYVKTVSKND.

The chain crosses the membrane as a helical span at residues 5–25 (ILAFIATALFILVPTAFLLII).

This sequence belongs to the PsbM family. In terms of assembly, PSII is composed of 1 copy each of membrane proteins PsbA, PsbB, PsbC, PsbD, PsbE, PsbF, PsbH, PsbI, PsbJ, PsbK, PsbL, PsbM, PsbT, PsbX, PsbY, PsbZ, Psb30/Ycf12, at least 3 peripheral proteins of the oxygen-evolving complex and a large number of cofactors. It forms dimeric complexes.

The protein resides in the plastid. Its subcellular location is the chloroplast thylakoid membrane. In terms of biological role, one of the components of the core complex of photosystem II (PSII). PSII is a light-driven water:plastoquinone oxidoreductase that uses light energy to abstract electrons from H(2)O, generating O(2) and a proton gradient subsequently used for ATP formation. It consists of a core antenna complex that captures photons, and an electron transfer chain that converts photonic excitation into a charge separation. This subunit is found at the monomer-monomer interface. This is Photosystem II reaction center protein M from Ceratophyllum demersum (Rigid hornwort).